Consider the following 502-residue polypeptide: UDP-N-acetylglucosamine diphosphorylase 2 (502 aa).

A Substrate binding motif is present at residues 130–133 (LSGG). Substrate is bound at residue asparagine 250. The Substrate binding motif lies at 332-333 (EY). Position 429 (lysine 429) interacts with substrate.

It belongs to the UDPGP type 1 family. Monomer. Mg(2+) is required as a cofactor. It depends on Mn(2+) as a cofactor. In terms of tissue distribution, expressed in root tips, stipules, lateral root primordia, immature anthers and at the branching points of the flowering shoots.

The protein resides in the cytoplasm. The enzyme catalyses N-acetyl-alpha-D-glucosamine 1-phosphate + UTP + H(+) = UDP-N-acetyl-alpha-D-glucosamine + diphosphate. It carries out the reaction N-acetyl-alpha-D-galactosamine 1-phosphate + UTP + H(+) = UDP-N-acetyl-alpha-D-galactosamine + diphosphate. The catalysed reaction is alpha-D-glucose 1-phosphate + UTP + H(+) = UDP-alpha-D-glucose + diphosphate. The protein operates within nucleotide-sugar biosynthesis; UDP-N-acetyl-alpha-D-glucosamine biosynthesis; UDP-N-acetyl-alpha-D-glucosamine from N-acetyl-alpha-D-glucosamine 1-phosphate: step 1/1. In terms of biological role, uridylyltransferase involved in the biosynthesis of UDP-glucosamine, an essential precursor for glycoprotein and glycolipid synthesis. Can use UDP-glucosamine, the 4-epimer UDP-galactosamine and UDP-glucose as substrates. Acts redundantly with GLCNAC1PUT1. Required for gametogenesis and embryo development. The polypeptide is UDP-N-acetylglucosamine diphosphorylase 2 (GLCNAC1PUT2) (Arabidopsis thaliana (Mouse-ear cress)).